Here is a 598-residue protein sequence, read N- to C-terminus: Arginine--tRNA ligase (598 aa).

The 'HIGH' region motif lies at 131–141 (ANPTGPMHVGH). A disordered region spans residues 288-309 (KLPPPKSKKGQPPPQAQPDEEG).

It belongs to the class-I aminoacyl-tRNA synthetase family. As to quaternary structure, monomer.

It is found in the cytoplasm. The catalysed reaction is tRNA(Arg) + L-arginine + ATP = L-arginyl-tRNA(Arg) + AMP + diphosphate. In Anaeromyxobacter dehalogenans (strain 2CP-C), this protein is Arginine--tRNA ligase.